Here is a 263-residue protein sequence, read N- to C-terminus: 3-methyl-2-oxobutanoate hydroxymethyltransferase (263 aa).

Mg(2+) contacts are provided by Asp-45 and Asp-84. 3-methyl-2-oxobutanoate-binding positions include 45 to 46 (DS), Asp-84, and Lys-112. Glu-114 provides a ligand contact to Mg(2+). The active-site Proton acceptor is the Glu-181.

It belongs to the PanB family. As to quaternary structure, homodecamer; pentamer of dimers. Mg(2+) is required as a cofactor.

The protein localises to the cytoplasm. It carries out the reaction 3-methyl-2-oxobutanoate + (6R)-5,10-methylene-5,6,7,8-tetrahydrofolate + H2O = 2-dehydropantoate + (6S)-5,6,7,8-tetrahydrofolate. It participates in cofactor biosynthesis; (R)-pantothenate biosynthesis; (R)-pantoate from 3-methyl-2-oxobutanoate: step 1/2. Catalyzes the reversible reaction in which hydroxymethyl group from 5,10-methylenetetrahydrofolate is transferred onto alpha-ketoisovalerate to form ketopantoate. The chain is 3-methyl-2-oxobutanoate hydroxymethyltransferase from Proteus mirabilis (strain HI4320).